The primary structure comprises 332 residues: tRNA U34 carboxymethyltransferase (332 aa).

Residues K91, W105, K110, G130, 152–154 (DPS), 181–182 (IE), M196, Y200, and R315 each bind carboxy-S-adenosyl-L-methionine.

Belongs to the class I-like SAM-binding methyltransferase superfamily. CmoB family. Homotetramer.

It catalyses the reaction carboxy-S-adenosyl-L-methionine + 5-hydroxyuridine(34) in tRNA = 5-carboxymethoxyuridine(34) in tRNA + S-adenosyl-L-homocysteine + H(+). Functionally, catalyzes carboxymethyl transfer from carboxy-S-adenosyl-L-methionine (Cx-SAM) to 5-hydroxyuridine (ho5U) to form 5-carboxymethoxyuridine (cmo5U) at position 34 in tRNAs. The polypeptide is tRNA U34 carboxymethyltransferase (Shewanella sp. (strain W3-18-1)).